A 463-amino-acid polypeptide reads, in one-letter code: MYGNYSHFMKFPAGYGGSPGHTGSTSMSPSAALSTGKPMDSHPSYTDTPVSAPRTLSAVGTPLNALGSPYRVITSAMGPPSGALAAPPGINLVAPPSSQLNVVNSVSSSEDIKPLPGLPGIGNMNYPSTSPGSLVKHICAICGDRSSGKHYGVYSCEGCKGFFKRTIRKDLIYTCRDNKDCLIDKRQRNRCQYCRYQKCLVMGMKREAVQEERQRSRERAESEAECATSGHEDMPVERILEAELAVEPKTESYGDMNMENSTNDPVTNICHAADKQLFTLVEWAKRIPHFSDLTLEDQVILLRAGWNELLIASFSHRSVSVQDGILLATGLHVHRSSAHSAGVGSIFDRVLTELVSKMKDMQMDKSELGCLRAIVLFNPDAKGLSNPSEVETLREKVYATLEAYTKQKYPEQPGRFAKLLLRLPALRSIGLKCLEHLFFFKLIGDTPIDTFLMEMLETPLQIT.

Positions 1–138 are modulating; it reads MYGNYSHFMK…TSPGSLVKHI (138 aa). Positions 18-53 are disordered; the sequence is SPGHTGSTSMSPSAALSTGKPMDSHPSYTDTPVSAP. Polar residues predominate over residues 21–33; the sequence is HTGSTSMSPSAAL. The nuclear receptor DNA-binding region spans 136-211; the sequence is KHICAICGDR…MGMKREAVQE (76 aa). 2 NR C4-type zinc fingers span residues 139 to 159 and 175 to 199; these read CAIC…CEGC and CRDN…YQKC. The hinge stretch occupies residues 205–230; sequence KREAVQEERQRSRERAESEAECATSG. The 229-residue stretch at 231 to 459 folds into the NR LBD domain; that stretch reads HEDMPVERIL…TFLMEMLETP (229 aa).

Belongs to the nuclear hormone receptor family. NR2 subfamily. As to quaternary structure, homodimer. Heterodimer with a RAR molecule. Binds DNA preferentially as a RAR/RXR heterodimer. Interacts with RARA. In terms of processing, acetylated by EP300. In terms of tissue distribution, expressed in aortic endothelial cells (at protein level).

The protein resides in the nucleus. Its subcellular location is the cytoplasm. Functionally, receptor for retinoic acid. Retinoic acid receptors bind as heterodimers to their target response elements in response to their ligands, all-trans or 9-cis retinoic acid, and regulate gene expression in various biological processes. The RAR/RXR heterodimers bind to the retinoic acid response elements (RARE) composed of tandem 5'-AGGTCA-3' sites known as DR1-DR5. The high affinity ligand for RXRs is 9-cis retinoic acid. The chain is Retinoic acid receptor RXR-gamma (RXRG) from Homo sapiens (Human).